Consider the following 844-residue polypeptide: MCDVDLKTCQKSSKFKKKDIVELGKQCGVNPYLSNGKEKSRTVICTEIVASYNPPPGSSQGDDSEHESISQVNNIPNRNEKFLPKSKYPTYTQVLNMEKRQLKALAKKLGLEYKKQTEQQLQGAINLKIKTLEGLNSSTRSRSPSVRSRCRSPSPRAPSVRSRLPSTRSRCRSPSPRAPSTRSRSPSVRSRCRSPSPRAPSVRSRSPSRQSVRQSSESADEAEQVALETMKTAHLRMLATTLGASTVTGMKKKDLIDYIKSRRKSPSPSPVPPSTRCDPTTTAPPMEDLFKKKVDELKTMAKNAGFVRWNGKTLSKMNKSDLVDFLLNGMNRPSPSLPQSRSRTRSPPPPPRSRSPSVGSPSVRDGGAGRRRLPELTRAQLTAMKVVDLKAMATELGLTRYRGMNRTQMRKGDVINFIIETQKKQKTPSPSPTPPSPVPSVVGSRRPKSPLPYKSRDFVALADDDSEPGVEVQKKMGKSGEREPKSVPNVRIIPSEIPAPTEGSLRSRLSTQQQTQQSVVYEDPNESIKPEESVRAPKLSVVDPQLSRKTLKPLPSLVVTDQPSKQPELPKYKGRTPYTDLEQLAQSKGYTVKQVSGDGNCLFRSVCKSIRALRGEKFTHRQLRQMVVDYLRENPEFLQVYLEYVARQRDNSLPSTEQYLSEMSKCGTWGDLICLKTLSEILKVQFNLLILNTKQFQMVSSQDDYPDVIPLGYIDNYHYTSLVPIGLDSKGGAASSTTTGLKQLDGPRPPITLIPESQVPAVAATISTQQPPSIVAPPISVGGSQLVPSIVPQPQMPKPDFKPVKPLSNLNELLDLMDRVKPQVYNDISQLEKARQSIKVSLGL.

Disordered regions lie at residues 136–223, 261–287, 326–377, and 422–541; these read NSST…DEAE, SRRK…PPME, LLNG…PELT, and QKKQ…KLSV. Over residues 137-216 the composition is skewed to low complexity; that stretch reads SSTRSRSPSV…PSRQSVRQSS (80 aa). 2 stretches are compositionally biased toward low complexity: residues 332-341 and 354-364; these read RPSPSLPQSR and RSPSVGSPSVR. The span at 429 to 438 shows a compositional bias: pro residues; sequence SPSPTPPSPV. The span at 472 to 485 shows a compositional bias: basic and acidic residues; the sequence is VQKKMGKSGEREPK. Low complexity predominate over residues 504–518; sequence SLRSRLSTQQQTQQS. Positions 526-535 are enriched in basic and acidic residues; it reads ESIKPEESVR. Positions 590–725 constitute an OTU domain; the sequence is YTVKQVSGDG…NYHYTSLVPI (136 aa). Residue Asp-598 is part of the active site. Catalysis depends on Cys-601, which acts as the Nucleophile. His-718 is a catalytic residue.

It catalyses the reaction Thiol-dependent hydrolysis of ester, thioester, amide, peptide and isopeptide bonds formed by the C-terminal Gly of ubiquitin (a 76-residue protein attached to proteins as an intracellular targeting signal).. Functionally, hydrolase that can remove conjugated ubiquitin from proteins and may therefore play an important regulatory role at the level of protein turnover by preventing degradation. The chain is Putative ubiquitin thioesterase 232R from Aedes vexans (Inland floodwater mosquito).